The primary structure comprises 144 residues: Snaclec 6 (144 aa).

A signal peptide spans 1–23 (MGRFISVSFGLLVVFLSLSGTGA). 3 disulfide bridges follow: C25/C36, C53/C142, and C119/C134. The C-type lectin domain maps to 32–143 (HEGHCYKVFK…CNFIAPVVCK (112 aa)).

This sequence belongs to the snaclec family. Heterodimer; disulfide-linked.

The protein localises to the secreted. Its function is as follows. Interferes with one step of hemostasis (modulation of platelet aggregation, or coagulation cascade, for example). The protein is Snaclec 6 of Daboia siamensis (Eastern Russel's viper).